Here is a 316-residue protein sequence, read N- to C-terminus: dTDP-4-dehydro-6-deoxyglucose reductase (316 aa).

An NAD(+)-binding site is contributed by 16-17 (FI). Tyr-151 serves as the catalytic Proton acceptor. Lys-155 contacts NAD(+).

This sequence belongs to the NAD(P)-dependent epimerase/dehydratase family.

The catalysed reaction is dTDP-alpha-D-fucose + NAD(+) = dTDP-4-dehydro-6-deoxy-alpha-D-glucose + NADH + H(+). It carries out the reaction dTDP-alpha-D-fucose + NADP(+) = dTDP-4-dehydro-6-deoxy-alpha-D-glucose + NADPH + H(+). It functions in the pathway bacterial outer membrane biogenesis; LPS O-antigen biosynthesis. Its activity is regulated as follows. Inhibited by Cu(2+), while other divalent cations such as Ca(2+), Co(2+), Fe(2+), Mn(2+) and Mg(2+) have no obvious effects on enzyme activity. In terms of biological role, catalyzes the stereospecific reduction of the C-4 keto group of dTDP-4-dehydro-6-deoxy-D-glucose, leading to dTDP-D-fucopyranose. This is a step in the biosynthesis of D-fucofuranose, a component of E.coli O52 O antigen. Is more efficient using NADH than NADPH as cosubstrate. The protein is dTDP-4-dehydro-6-deoxyglucose reductase (fcf1) of Escherichia coli.